The following is a 153-amino-acid chain: MAPKKDEKPATAEAGAEAPAKAEAKPKAEKAGKKAKKEPAKKAAKEPKGDGEKKDKKKKKSAVETYKLYIYKVLKQVHPDTGISSKAMSIMNSFINDIFEKVATEASKLSRYNKKPTVTSREIQTAVRLVLPGELAKHAVSEGTKAVTKFTSG.

Basic and acidic residues-rich tracts occupy residues 1–10 (MAPKKDEKPA) and 20–54 (AKAEAKPKAEKAGKKAKKEPAKKAAKEPKGDGEKK). The disordered stretch occupies residues 1–60 (MAPKKDEKPATAEAGAEAPAKAEAKPKAEKAGKKAKKEPAKKAAKEPKGDGEKKDKKKKK). Residues K41 and K42 each carry the N6-acetyllysine modification. K149 is covalently cross-linked (Glycyl lysine isopeptide (Lys-Gly) (interchain with G-Cter in ubiquitin)).

The protein belongs to the histone H2B family. As to quaternary structure, the nucleosome is a histone octamer containing two molecules each of H2A, H2B, H3 and H4 assembled in one H3-H4 heterotetramer and two H2A-H2B heterodimers. The octamer wraps approximately 147 bp of DNA. In terms of processing, the N-terminus is blocked. Post-translationally, can be acetylated to form H2BK33ac and H2BK34ac. Acetylated mainly on the ubiquitinated form. Monoubiquitinated to form H2BK143ub1; which is increased during the light period and may give a specific tag for epigenetic transcriptional activation.

It is found in the nucleus. It localises to the chromosome. In terms of biological role, core component of nucleosome. Nucleosomes wrap and compact DNA into chromatin, limiting DNA accessibility to the cellular machineries which require DNA as a template. Histones thereby play a central role in transcription regulation, DNA repair, DNA replication and chromosomal stability. DNA accessibility is regulated via a complex set of post-translational modifications of histones, also called histone code, and nucleosome remodeling. This chain is Histone H2B.3, found in Chlamydomonas reinhardtii (Chlamydomonas smithii).